Consider the following 716-residue polypeptide: DEAD-box ATP-dependent RNA helicase 31 (716 aa).

Positions 99-188 (GILKSDDEDE…LRLEDESSDE (90 aa)) are disordered. A compositionally biased stretch (basic and acidic residues) spans 110 to 121 (DRSRGRNQEKRG). Positions 144-153 (SRIQGKSSEA) are enriched in polar residues. The span at 155 to 188 (FRGRKETSFSRDREDEKGLRKREDLRLEDESSDE) shows a compositional bias: basic and acidic residues. The Q motif signature appears at 248–276 (TRFDHYPLSPLSLKAIKDAGYETMTVVQE). One can recognise a Helicase ATP-binding domain in the interval 279 to 462 (LPIILKGKDV…LVALRRDHEF (184 aa)). 292 to 299 (AKTGTGKT) is a binding site for ATP. Residues 410–413 (DEAD) carry the DEAD box motif. The region spanning 497 to 643 (LREHIMGNVD…IDPETVKKVQ (147 aa)) is the Helicase C-terminal domain.

The protein belongs to the DEAD box helicase family.

The enzyme catalyses ATP + H2O = ADP + phosphate + H(+). In Arabidopsis thaliana (Mouse-ear cress), this protein is DEAD-box ATP-dependent RNA helicase 31 (RH31).